The primary structure comprises 65 residues: Large ribosomal subunit protein bL28 (65 aa).

It belongs to the bacterial ribosomal protein bL28 family.

The sequence is that of Large ribosomal subunit protein bL28 from Lachnoclostridium phytofermentans (strain ATCC 700394 / DSM 18823 / ISDg) (Clostridium phytofermentans).